Reading from the N-terminus, the 322-residue chain is Thioredoxin reductase (322 aa).

FAD is bound by residues 12–15 (SGPA), 34–42 (EGAVTAGGA), Asn-51, and Val-84. A disulfide bridge connects residues Cys-136 and Cys-139. Residues His-176, Arg-182, and Tyr-259 each contribute to the NADP(+) site. FAD contacts are provided by residues Asp-279 and 286–289 (RQAI). NADP(+) is bound at residue Arg-286.

The protein belongs to the class-II pyridine nucleotide-disulfide oxidoreductase family. As to quaternary structure, homodimer. Requires FAD as cofactor.

The catalysed reaction is [thioredoxin]-dithiol + NADP(+) = [thioredoxin]-disulfide + NADPH + H(+). Functionally, component of the thioredoxin-thioredoxin reductase system which may be involved in biosynthesis of penicillins and cephalosporins and may be important in determining the thiol-disulfide redox balance. This is Thioredoxin reductase from Streptomyces clavuligerus.